The primary structure comprises 207 residues: Small ribosomal subunit protein uS4 (207 aa).

Residues 20–45 (TPKAARYMEKRPYAPGEHGRTKRKAD) form a disordered region. Residues 93–158 (MRLDALVLRA…TEPFQVAAAG (66 aa)) form the S4 RNA-binding domain.

The protein belongs to the universal ribosomal protein uS4 family. Part of the 30S ribosomal subunit. Contacts protein S5. The interaction surface between S4 and S5 is involved in control of translational fidelity.

One of the primary rRNA binding proteins, it binds directly to 16S rRNA where it nucleates assembly of the body of the 30S subunit. Functionally, with S5 and S12 plays an important role in translational accuracy. This is Small ribosomal subunit protein uS4 from Leifsonia xyli subsp. xyli (strain CTCB07).